Here is a 455-residue protein sequence, read N- to C-terminus: Bifunctional protein GlmU (455 aa).

A pyrophosphorylase region spans residues 1–226; sequence MGLSVVILAA…EFEILGVNDR (226 aa). UDP-N-acetyl-alpha-D-glucosamine is bound by residues 8–11, Lys-22, Gln-73, 78–79, 99–101, Gly-136, Glu-151, Asn-166, and Asn-224; these read LAAG, GT, and YGD. Asp-101 lines the Mg(2+) pocket. Residue Asn-224 participates in Mg(2+) binding. A linker region spans residues 227 to 247; it reads TQLASLERVWQRNVAEKIMAK. Residues 248–455 form an N-acetyltransferase region; the sequence is GVSIADPNRF…WQRSVKKTDK (208 aa). The UDP-N-acetyl-alpha-D-glucosamine site is built by Arg-330 and Lys-348. Residue His-360 is the Proton acceptor of the active site. 2 residues coordinate UDP-N-acetyl-alpha-D-glucosamine: Tyr-363 and Asn-374. Acetyl-CoA-binding positions include Ala-377, 383 to 384, Ser-402, Ala-420, and Arg-437; that span reads NY.

This sequence in the N-terminal section; belongs to the N-acetylglucosamine-1-phosphate uridyltransferase family. It in the C-terminal section; belongs to the transferase hexapeptide repeat family. In terms of assembly, homotrimer. It depends on Mg(2+) as a cofactor.

It localises to the cytoplasm. The catalysed reaction is alpha-D-glucosamine 1-phosphate + acetyl-CoA = N-acetyl-alpha-D-glucosamine 1-phosphate + CoA + H(+). The enzyme catalyses N-acetyl-alpha-D-glucosamine 1-phosphate + UTP + H(+) = UDP-N-acetyl-alpha-D-glucosamine + diphosphate. Its pathway is nucleotide-sugar biosynthesis; UDP-N-acetyl-alpha-D-glucosamine biosynthesis; N-acetyl-alpha-D-glucosamine 1-phosphate from alpha-D-glucosamine 6-phosphate (route II): step 2/2. It participates in nucleotide-sugar biosynthesis; UDP-N-acetyl-alpha-D-glucosamine biosynthesis; UDP-N-acetyl-alpha-D-glucosamine from N-acetyl-alpha-D-glucosamine 1-phosphate: step 1/1. It functions in the pathway bacterial outer membrane biogenesis; LPS lipid A biosynthesis. Functionally, catalyzes the last two sequential reactions in the de novo biosynthetic pathway for UDP-N-acetylglucosamine (UDP-GlcNAc). The C-terminal domain catalyzes the transfer of acetyl group from acetyl coenzyme A to glucosamine-1-phosphate (GlcN-1-P) to produce N-acetylglucosamine-1-phosphate (GlcNAc-1-P), which is converted into UDP-GlcNAc by the transfer of uridine 5-monophosphate (from uridine 5-triphosphate), a reaction catalyzed by the N-terminal domain. In Francisella tularensis subsp. tularensis (strain SCHU S4 / Schu 4), this protein is Bifunctional protein GlmU.